We begin with the raw amino-acid sequence, 860 residues long: MLGQIVGGLIGGHHDSKKVKGTVVMMKKNALDFTDLAGSLTDKIFEALGQKVSFQLISSVQSDPANGLQGKHSNPAYLENFLFTLTPLAAGETAFGVTFDWNEEFGVPGAFIIKNTHINEFFLKSLTLEDVPNHGKVHFVCNSWVYPSFRYKSDRIFFANQPYLPSETPELLRKYRENELLTLRGDGTGKREAWDRIYDYDVYNDLGNPDQGKENVRTTLGGSADYPYPRRGRTGRPPTRTDPKSESRIPLILSLDIYVPRDERFGHLKMSDFLTYALKSIVQFILPELHALFDGTPNEFDSFEDVLRLYEGGIRLPQGPLFKALTDAIPLEMIRELLRTDGEGILRFPTPLVIKDSKTAWRTDEEFAREMLAGVNPIIISRLQEFPPKSKLDPEAYGNQNSTITAEHIEDKLDGLTVDEAMNNNKLFILNHHDVLIPYLRRINTTTTKTYASRTLLFLQDNGSLKPLAIELSLPHPDGDQFGVTSKVYTPSDQGVESSIWQLAKAYVAVNDSGVHQLISHWLNTHAVIEPFVIATNRQLSVLHPIHKLLYPHFRDTMNINAMARQILINAGGVLESTVFPSKFAMEMSAVVYKDWVFPDQALPADLVKRGVAVEDSSSPHGVRLLIEDYPYAVDGLEIWSAIKSWVTDYCSFYYGSDEEILKDNELQAWWKELREVGHGDKKNEPWWPEMETPQELIDSCTTIIWIASALHAAVNFGQYPYAGYLPNRPTVSRRFMPEPGTPEYEELKKNPDKAFLKTITAQLQTLLGVSLIEILSRHTTDEIYLGQRESPEWTKDKEPLAAFDKFGKKLTDIEKQIIQRNGDNILINRSGPVNAPYTLLFPTSEGGLTGKGIPNSVSI.

Residues asparagine 29–alanine 159 form the PLAT domain. Residues proline 162 to isoleucine 860 form the Lipoxygenase domain. Residues proline 209–glutamate 246 form a disordered region. The Fe cation site is built by histidine 521, histidine 526, histidine 712, asparagine 716, and isoleucine 860.

Belongs to the lipoxygenase family. As to quaternary structure, monomer. It depends on Fe cation as a cofactor. As to expression, expressed in tubers and roots. Not detected in leaves, flowers, stems, shoot tips, or axillary buds.

It localises to the cytoplasm. The catalysed reaction is (9Z,12Z)-octadecadienoate + O2 = (9S)-hydroperoxy-(10E,12Z)-octadecadienoate. It functions in the pathway lipid metabolism; oxylipin biosynthesis. Functionally, plant lipoxygenases may be involved in a number of diverse aspects of plant physiology including growth and development, pest resistance, and senescence or responses to wounding. Catalyzes the hydroperoxidation of lipids containing a cis,cis-1,4-pentadiene structure. This is Probable linoleate 9S-lipoxygenase 4 (LOX1.4) from Solanum tuberosum (Potato).